The following is a 363-amino-acid chain: Peptide chain release factor 1 (363 aa).

At glutamine 237 the chain carries N5-methylglutamine. Positions 284-296 (EDEKRRSAEESTR) are enriched in basic and acidic residues. The disordered stretch occupies residues 284–306 (EDEKRRSAEESTRRSLVASGDRS).

The protein belongs to the prokaryotic/mitochondrial release factor family. In terms of processing, methylated by PrmC. Methylation increases the termination efficiency of RF1.

It is found in the cytoplasm. Functionally, peptide chain release factor 1 directs the termination of translation in response to the peptide chain termination codons UAG and UAA. The chain is Peptide chain release factor 1 from Shewanella oneidensis (strain ATCC 700550 / JCM 31522 / CIP 106686 / LMG 19005 / NCIMB 14063 / MR-1).